The sequence spans 410 residues: MKIMSVNSGSSSLKFQLLEMPQQEVIVSGLVERIGSNQAVFTMKTKDKKDKQVLEVLNHQTAVELLLDALIQKKVINTLEEIEGVGHRVVQGGEIFSDSAVLTEKTLAQIESLCDLAPLHNPANIISIKAFQKVLPQVFQVAVFDTTFHQSMPAVNFLYATPYYWYQKYQIRKYGAHGTSYKYITEQMQQILGKKNAKIIICHAGNGVSLCAVDSGKSVDTSMGFTPLEGVPMGTRSGNIDPAVVKFIAEKENKTVACVIDDLNKKSGYLGVSGISNDTRDILASIKEGNQQAILSHDIQVKRIVDYIASYYVLLKGVDALVFTAGIGENSSFFRSEIIKRLSVLGIKLDEEKNKVQGKQELITTFDSAIKAFVVPTNEELAIAQDVLRLQQNQTNQDKDDQQECFCCCG.

N7 contacts Mg(2+). K14 is an ATP binding site. R88 contributes to the substrate binding site. D145 functions as the Proton donor/acceptor in the catalytic mechanism. Residues 203–207 (HAGNG), 278–280 (DTR), and 326–330 (GIGEN) each bind ATP. Residue E379 participates in Mg(2+) binding.

Belongs to the acetokinase family. As to quaternary structure, homodimer. Mg(2+) serves as cofactor. It depends on Mn(2+) as a cofactor.

It is found in the cytoplasm. The enzyme catalyses acetate + ATP = acetyl phosphate + ADP. The protein operates within metabolic intermediate biosynthesis; acetyl-CoA biosynthesis; acetyl-CoA from acetate: step 1/2. In terms of biological role, catalyzes the formation of acetyl phosphate from acetate and ATP. Can also catalyze the reverse reaction. This is Acetate kinase from Chlorante-Aster yellows phytoplasma.